Here is a 232-residue protein sequence, read N- to C-terminus: Ribose-5-phosphate isomerase A (232 aa).

Substrate is bound by residues threonine 31–threonine 34, aspartate 87–aspartate 90, and lysine 100–glycine 103. Residue glutamate 109 is the Proton acceptor of the active site. Lysine 127 contacts substrate.

It belongs to the ribose 5-phosphate isomerase family. As to quaternary structure, homodimer.

The enzyme catalyses aldehydo-D-ribose 5-phosphate = D-ribulose 5-phosphate. The protein operates within carbohydrate degradation; pentose phosphate pathway; D-ribose 5-phosphate from D-ribulose 5-phosphate (non-oxidative stage): step 1/1. In terms of biological role, catalyzes the reversible conversion of ribose-5-phosphate to ribulose 5-phosphate. The protein is Ribose-5-phosphate isomerase A of Bifidobacterium longum subsp. infantis (strain ATCC 15697 / DSM 20088 / JCM 1222 / NCTC 11817 / S12).